The primary structure comprises 410 residues: Glycylpeptide N-tetradecanoyltransferase (410 aa).

10 residues coordinate tetradecanoyl-CoA: F30, W31, F162, L163, C164, V165, S171, R173, L174, and A175.

The protein belongs to the NMT family. As to quaternary structure, heterodimer composed of NMT and AK2; AK2 myristoylation stabilizes the complex.

The protein resides in the cytoplasm. It catalyses the reaction N-terminal glycyl-[protein] + tetradecanoyl-CoA = N-tetradecanoylglycyl-[protein] + CoA + H(+). In terms of biological role, adds a myristoyl group to the N-terminal glycine residue of certain cellular proteins. Myristoylates adenylate kinase AK2. During the asexual blood stage, may myristoylate proteins such as ARO, CDPK1 and GAP45. Probably by mediating protein myristoylation, plays a role in the assembly of the inner membrane complex during the early stages of schizogony and in the formation of rhoptries in the late stages and thus merozoite egress. The polypeptide is Glycylpeptide N-tetradecanoyltransferase (Plasmodium falciparum (isolate 3D7)).